A 460-amino-acid chain; its full sequence is MASSQLEFNVERKQPELLGPAEPTPYELKELSDIDDQDGVRLFLTAIFIYPPPTKTSMPTRKTDPASDIRRGLSKAMVYYYPFAGRIREGPNRKLSVDCTGEGIVFCEADADIRLDGLGDVEVLRPPYPFIDKMTLGEGSAILGAPLVYVQVTRFACGGFIITGRFNHVMADAPGFTMFMKAAADLARGATVPMPLPVWERERYRSRVPPRVTFAHHEYMHVDDPPPRPTSEPWSLHSAFFTKADVATLRAQLPADLRKAATSFDIITACMWRCRVSALQYGPDEVVRLIVAVNSRTKFDPPLTGYYGNGLMLPAAVTEAGKLVGSDLGYAVELVREAKGKVTEEYVRSAADFLVLNGRVHFVVSNTFLVSDLRRLIDLANMDWGWGKAVSGGPVDVGENVISFLATSKNSAGEEGAVVPFCLPDSALGRFTSEVKKLVCFRPLENAAASNPDHGYMSRM.

The disordered stretch occupies residues 1-23; sequence MASSQLEFNVERKQPELLGPAEP. Residues His-168 and Asp-383 each act as proton acceptor in the active site. Positions 458–460 match the Microbody targeting signal motif; the sequence is SRM.

The protein belongs to the plant acyltransferase family. As to quaternary structure, monomer. In terms of tissue distribution, confined to immature fruits perisperm. Also detectable in roots.

It is found in the cytoplasm. It catalyses the reaction piperidine + (E,E)-piperoyl-CoA = piperine + CoA + H(+). The protein operates within aromatic compound metabolism. Its function is as follows. Involved in the biosynthesis of aromatic piperamides natural products such as piperine (1-piperoyl-piperidine), the pungent principle contributing, together with several terpenoids, to the aromatic properties of black pepper fruits, and displaying numerous pharmacological activities such as antiproliferative, antitumor, antiangiogenesis, antioxidant, antidiabetic, antiobesity, cardioprotective, antimicrobial, antiaging, and immunomodulatory effects. Can use piperidine and benzylamine as acceptors and various CoA-esters with aliphatic and aromatic amines as CoA-donors, including piperoyl-CoA, hexanoyl-CoA and octanoyl-CoA, and, to a lower extent, benzoyl-CoA. Mediates the conversion of piperidine to three piperine isomers in the presence of piperoyl-CoA. Its ability to convert in vitro piperidine to hexanoylpiperidine in the presence of hexanoyl-CoA, and to octanoylpiperidine in the presence of octanoyl-CoA is not confirmed in vivo according to fruits metabolome analysis. In Piper nigrum (Black pepper), this protein is Piperamide synthase.